The sequence spans 551 residues: MKAWLLVSSLCLSTFIAALEQTIISTAAESISRSLHTTELEFTWIGTAYLLPAAASTPPWGKLSDIFGRKPVLMISIVVFFIGSLIGALAINIDMLIAGRVIQGTGGGGILGLSATVIGDVFSPRERSKYYGVLGVTWGVACGLGPIVGGAFCQYVSWRWCFWINRTSLPQSSPNPLNLTTSVPVAGVAGALVLLFLEVHTPRTPIIEGLLAMDWLGTITIVGATVMFLLGLGYGGIAYPWNSATVVCLIVFGIGDNRRLRPDRMEGRQVLDHAAAPVQIPPPISPPSASAYIHGLRLHRPTLYYPPAVLSRSCSAPPRSLSGVYLLPVAVTLCVASTATGLYISHSGRYRPPIYFGLVMMILGHGLYINLQPYASWARIIIFQIIAGLGLGPLFQAPIIAIFSLTKPADTASAAATVFFARDIATAMSIVFGGVIFQNRIRAFKSDIEGVVSPELTELITSGGATTASDQIRALPAAARSLVRDRYNTALRSEWIFYTALSGAALLLSVFISKQVLSRDHKMNKTGLDVQEASRLEELEKEKKAAATDAV.

The N-terminal stretch at 1–18 (MKAWLLVSSLCLSTFIAA) is a signal peptide. Transmembrane regions (helical) follow at residues 40 to 60 (LEFTWIGTAYLLPAAASTPPW), 71 to 91 (PVLMISIVVFFIGSLIGALAI), 102 to 122 (IQGTGGGGILGLSATVIGDVF), and 132 to 152 (GVLGVTWGVACGLGPIVGGAF). N-linked (GlcNAc...) asparagine glycosylation is found at Asn-165 and Asn-178. A run of 8 helical transmembrane segments spans residues 179–199 (LTTSVPVAGVAGALVLLFLEV), 206–228 (IIEGLLAMDWLGTITIVGATVMF), 233–255 (GYGGIAYPWNSATVVCLIVFGIG), 324–344 (VYLLPVAVTLCVASTATGLYI), 354–374 (IYFGLVMMILGHGLYINLQPY), 380–400 (IIIFQIIAGLGLGPLFQAPII), 417–437 (TVFFARDIATAMSIVFGGVIF), and 493–513 (SEWIFYTALSGAALLLSVFIS). A glycan (N-linked (GlcNAc...) asparagine) is linked at Asn-524.

Belongs to the major facilitator superfamily. TCR/Tet family.

It is found in the membrane. Functionally, MFS-type transporter; part of the gene cluster that mediates the biosynthesis of isoflavipucine. The protein is MFS-type transporter ATEG_00331 of Aspergillus terreus (strain NIH 2624 / FGSC A1156).